The primary structure comprises 282 residues: Small ribosomal subunit protein uS3 (282 aa).

Residues 43 to 111 (IRRLMSKGME…QVQLNILEVK (69 aa)) form the KH type-2 domain. Positions 217 to 282 (AQSQAAAPRA…IGKGSNGTEA (66 aa)) are disordered. The segment covering 228 to 240 (RRNERGDRPDRGA) has biased composition (basic and acidic residues). Residues 256–269 (AVATGSAPTGTAAT) are compositionally biased toward low complexity.

Belongs to the universal ribosomal protein uS3 family. In terms of assembly, part of the 30S ribosomal subunit. Forms a tight complex with proteins S10 and S14.

Its function is as follows. Binds the lower part of the 30S subunit head. Binds mRNA in the 70S ribosome, positioning it for translation. This is Small ribosomal subunit protein uS3 from Kineococcus radiotolerans (strain ATCC BAA-149 / DSM 14245 / SRS30216).